A 776-amino-acid polypeptide reads, in one-letter code: MASLIYRQLLTNSYTVDLSDEIQEIGSTKTQNVTINLGPFAQTGYAPVNWGPGETNDSTTVEPVLDGPYQPTSFNPPVDYWMLLAPTAAGVVVEGTNNTDRWLATILVEPNVTSETRSYTLFGTQEQITIANASQTQWKFIDVVKTTQNGSYSQYGPLQSTPKLYAVMKHNGKIYTYNGETPNVTTKYYSTTNYDSVNMTAFCDFYIIPREEESTCTEYINNGLPPIQNTRNIVPLALSARNIISHRAQANEDIVVSKTSLWKEMQYNRDITIRFKFASSIVKSGGLGYKWSEISFKPANYQYTYTRDGEDVTAHTTCSVNGMNDFNFNGGSLPTDFIISRYEVIKENSYVYVDYWDDSQAFRNMVYVRSLAANLNSVICTGGDYSFALPVGQWPVMTGGAVSLHSAGVTLSTQFTDFVSFNSLRFRFRLTVEEPSFSITRTRVGGLYGLPAAYPNNGKEYYEVAGRLSLISLVPSNDDYQTPITNSVTVRQDLERQLGELREEFNALSQEIAMSQLIYLALLPLDMFSMFSGIKSTIDAAKSMATSVMKKFKKSGLANSVSTLTDSLSDAASSISRGASIRSVGSSASAWTDVSTQITDVSSSVSSISTQTSTISRRLRLKEMATQTEGMNFDDISAAVLKTKIDRSTQISPNTLPDIVTEASEKFIPNRAYRVINNDEVFEAGTDGRYFAYRVETFDEIPFDVQKFADLVTDSPVISAIIDFKTLKNLNDNYGISRQQAFNLLRSDPRVLREFINQDNPIIRNRIEQLIMQCRL.

Positions 65-224 are spike head; that stretch reads LDGPYQPTSF…TCTEYINNGL (160 aa). A disulfide bridge connects residues cysteine 203 and cysteine 216. The spike body and stalk (antigen domain) stretch occupies residues 248-479; the sequence is AQANEDIVVS…LISLVPSNDD (232 aa). Positions 308–310 match the DGE motif; interaction with ITGA2/ITGB1 heterodimer motif; sequence DGE. Residues cysteine 318 and cysteine 380 are joined by a disulfide bond. The segment at 389–409 is hydrophobic; possible role in virus entry into host cell; it reads LPVGQWPVMTGGAVSLHSAGV. The YGL motif; interaction with ITGA4 signature appears at 448–450; that stretch reads YGL. Residues 484–511 are a coiled coil; it reads ITNSVTVRQDLERQLGELREEFNALSQE. The tract at residues 510-776 is spike foot; it reads QEIAMSQLIY…IEQLIMQCRL (267 aa). The KID motif; interaction with HSPA8 signature appears at 644–646; it reads KID.

It belongs to the rotavirus VP4 family. Homotrimer. VP4 adopts a dimeric appearance above the capsid surface, while forming a trimeric base anchored inside the capsid layer. Only hints of the third molecule are observed above the capsid surface. It probably performs a series of molecular rearrangements during viral entry. Prior to trypsin cleavage, it is flexible. The priming trypsin cleavage triggers its rearrangement into rigid spikes with approximate two-fold symmetry of their protruding parts. After an unknown second triggering event, cleaved VP4 may undergo another rearrangement, in which two VP5* subunits fold back on themselves and join a third subunit to form a tightly associated trimer, shaped like a folded umbrella. Interacts with VP6. Interacts with VP7. In terms of assembly, homotrimer. The trimer is coiled-coil stabilized by its C-terminus, however, its N-terminus, known as antigen domain or 'body', seems to be flexible allowing it to self-associate either as a dimer or a trimer. Interacts with host ITGA2 (via ITAG2 I-domain); this interaction occurs when ITGA2 is part of the integrin heterodimer ITGA2/ITGB1. Interacts with host integrin heterodimer ITGA4/ITGB1 and ITGA4/ITGB7. Interacts with host HSPA8/HSP70. Post-translationally, proteolytic cleavage by trypsin results in activation of VP4 functions and greatly increases infectivity. The penetration into the host cell is dependent on trypsin treatment of VP4. It produces two peptides, VP5* and VP8* that remain associated with the virion. Cleavage of VP4 by trypsin occurs in vivo in the lumen of the intestine prior to infection of enterocytes.

It is found in the virion. The protein localises to the host rough endoplasmic reticulum. The protein resides in the host cell membrane. It localises to the host cytoplasm. Its subcellular location is the host cytoskeleton. It is found in the host endoplasmic reticulum-Golgi intermediate compartment. In terms of biological role, spike-forming protein that mediates virion attachment to the host epithelial cell receptors and plays a major role in cell penetration, determination of host range restriction and virulence. Rotavirus attachment and entry into the host cell probably involves multiple sequential contacts between the outer capsid proteins VP4 and VP7, and the cell receptors. It is subsequently lost, together with VP7, following virus entry into the host cell. Following entry into the host cell, low intracellular or intravesicular Ca(2+) concentration probably causes the calcium-stabilized VP7 trimers to dissociate from the virion. This step is probably necessary for the membrane-disrupting entry step and the release of VP4, which is locked onto the virion by VP7. During the virus exit from the host cell, VP4 seems to be required to target the newly formed virions to the host cell lipid rafts. Functionally, forms the spike 'foot' and 'body' and acts as a membrane permeabilization protein that mediates release of viral particles from endosomal compartments into the cytoplasm. During entry, the part of VP5* that protrudes from the virus folds back on itself and reorganizes from a local dimer to a trimer. This reorganization may be linked to membrane penetration by exposing VP5* hydrophobic region. In integrin-dependent strains, VP5* targets the integrin heterodimer ITGA2/ITGB1 for cell attachment. Its function is as follows. Forms the head of the spikes and mediates the recognition of specific host cell surface glycans. It is the viral hemagglutinin and an important target of neutralizing antibodies. In sialic acid-dependent strains, VP8* binds to host cell sialic acid, most probably a ganglioside, providing the initial contact. In some other strains, VP8* mediates the attachment to histo-blood group antigens (HBGAs) for viral entry. The chain is Outer capsid protein VP4 from Rotavirus A (strain RVA/Monkey/United States/RRV/1975/G3P5B[3]) (RV-A).